Reading from the N-terminus, the 361-residue chain is Phosphoserine aminotransferase (361 aa).

Residues Ser9 and Arg42 each contribute to the L-glutamate site. Pyridoxal 5'-phosphate-binding positions include 76–77, Trp102, Thr153, Asp173, and Gln196; that span reads AR. Residue Lys197 is modified to N6-(pyridoxal phosphate)lysine. Pyridoxal 5'-phosphate is bound at residue 238 to 239; the sequence is NT.

It belongs to the class-V pyridoxal-phosphate-dependent aminotransferase family. SerC subfamily. Homodimer. It depends on pyridoxal 5'-phosphate as a cofactor.

It localises to the cytoplasm. The catalysed reaction is O-phospho-L-serine + 2-oxoglutarate = 3-phosphooxypyruvate + L-glutamate. It carries out the reaction 4-(phosphooxy)-L-threonine + 2-oxoglutarate = (R)-3-hydroxy-2-oxo-4-phosphooxybutanoate + L-glutamate. Its pathway is amino-acid biosynthesis; L-serine biosynthesis; L-serine from 3-phospho-D-glycerate: step 2/3. The protein operates within cofactor biosynthesis; pyridoxine 5'-phosphate biosynthesis; pyridoxine 5'-phosphate from D-erythrose 4-phosphate: step 3/5. Catalyzes the reversible conversion of 3-phosphohydroxypyruvate to phosphoserine and of 3-hydroxy-2-oxo-4-phosphonooxybutanoate to phosphohydroxythreonine. The protein is Phosphoserine aminotransferase of Erwinia tasmaniensis (strain DSM 17950 / CFBP 7177 / CIP 109463 / NCPPB 4357 / Et1/99).